Reading from the N-terminus, the 88-residue chain is Acylphosphatase (88 aa).

In terms of domain architecture, Acylphosphatase-like spans 3-88 (AARFVVSGVV…VPPTEDFVTG (86 aa)). Residues R18 and N36 contribute to the active site.

Belongs to the acylphosphatase family.

The enzyme catalyses an acyl phosphate + H2O = a carboxylate + phosphate + H(+). The chain is Acylphosphatase (acyP) from Xanthomonas euvesicatoria pv. vesicatoria (strain 85-10) (Xanthomonas campestris pv. vesicatoria).